The primary structure comprises 378 residues: Dual-specificity RNA methyltransferase RlmN (378 aa).

The active-site Proton acceptor is the Glu95. Residues 101 to 345 enclose the Radical SAM core domain; sequence EETRGTLCVS…TTIRKTRGDD (245 aa). Cys108 and Cys350 form a disulfide bridge. Positions 115, 119, and 122 each coordinate [4Fe-4S] cluster. Residues 176–177, Ser208, 230–232, and Asn307 contribute to the S-adenosyl-L-methionine site; these read GE and SLH. Cys350 (S-methylcysteine intermediate) is an active-site residue.

Belongs to the radical SAM superfamily. RlmN family. The cofactor is [4Fe-4S] cluster.

It localises to the cytoplasm. The catalysed reaction is adenosine(2503) in 23S rRNA + 2 reduced [2Fe-2S]-[ferredoxin] + 2 S-adenosyl-L-methionine = 2-methyladenosine(2503) in 23S rRNA + 5'-deoxyadenosine + L-methionine + 2 oxidized [2Fe-2S]-[ferredoxin] + S-adenosyl-L-homocysteine. The enzyme catalyses adenosine(37) in tRNA + 2 reduced [2Fe-2S]-[ferredoxin] + 2 S-adenosyl-L-methionine = 2-methyladenosine(37) in tRNA + 5'-deoxyadenosine + L-methionine + 2 oxidized [2Fe-2S]-[ferredoxin] + S-adenosyl-L-homocysteine. Its function is as follows. Specifically methylates position 2 of adenine 2503 in 23S rRNA and position 2 of adenine 37 in tRNAs. m2A2503 modification seems to play a crucial role in the proofreading step occurring at the peptidyl transferase center and thus would serve to optimize ribosomal fidelity. The polypeptide is Dual-specificity RNA methyltransferase RlmN (Burkholderia thailandensis (strain ATCC 700388 / DSM 13276 / CCUG 48851 / CIP 106301 / E264)).